Consider the following 1376-residue polypeptide: Mediator of RNA polymerase II transcription subunit 23 (1376 aa).

Positions 1346-1369 are enriched in low complexity; it reads SNSSSVQQTSSASSPTAQSTAGAA. Residues 1346–1376 are disordered; that stretch reads SNSSSVQQTSSASSPTAQSTAGAAIPLSVTQ.

Belongs to the Mediator complex subunit 23 family. As to quaternary structure, component of the Mediator complex.

It localises to the nucleus. Functionally, component of the Mediator complex, a coactivator involved in the regulated transcription of nearly all RNA polymerase II-dependent genes. Mediator functions as a bridge to convey information from gene-specific regulatory proteins to the basal RNA polymerase II transcription machinery. Mediator is recruited to promoters by direct interactions with regulatory proteins and serves as a scaffold for the assembly of a functional preinitiation complex with RNA polymerase II and the general transcription factors. The polypeptide is Mediator of RNA polymerase II transcription subunit 23 (med23) (Danio rerio (Zebrafish)).